A 275-amino-acid chain; its full sequence is MALKTFRPITPSLRQLVLVDRSELWKGKPVKALTEGLTGSGGRNNTGRITARRMGGGHKRRYRLVDFKRRMKPDMPATVERLEYDPNRTAFIALIRYTDGTLAYILAPQRLKAGDTVVSGEKVDVKPGNAMPLRNIPVGTIVHNVELKPGKGGQLARAAGTYLQLVGRDQGYAQLKLPSGELRVVRGECFATIGAVSNPDQANVVIGKAGRNRWLGRRPSVRGVVMNPIDHPHGGGEGRTSGGRHPVTPWGKPTKGKKTRQNKATDKFIIRRRAK.

Disordered stretches follow at residues 36–55 (GLTG…RRMG) and 224–263 (VVMN…RQNK).

Belongs to the universal ribosomal protein uL2 family. In terms of assembly, part of the 50S ribosomal subunit. Forms a bridge to the 30S subunit in the 70S ribosome.

One of the primary rRNA binding proteins. Required for association of the 30S and 50S subunits to form the 70S ribosome, for tRNA binding and peptide bond formation. It has been suggested to have peptidyltransferase activity; this is somewhat controversial. Makes several contacts with the 16S rRNA in the 70S ribosome. This chain is Large ribosomal subunit protein uL2, found in Rhodospirillum centenum (strain ATCC 51521 / SW).